A 265-amino-acid chain; its full sequence is Ribosomal RNA small subunit methyltransferase A (265 aa).

Residues histidine 13, leucine 15, glycine 40, glutamate 61, aspartate 85, and asparagine 103 each coordinate S-adenosyl-L-methionine.

This sequence belongs to the class I-like SAM-binding methyltransferase superfamily. rRNA adenine N(6)-methyltransferase family. RsmA subfamily.

The protein localises to the cytoplasm. It catalyses the reaction adenosine(1518)/adenosine(1519) in 16S rRNA + 4 S-adenosyl-L-methionine = N(6)-dimethyladenosine(1518)/N(6)-dimethyladenosine(1519) in 16S rRNA + 4 S-adenosyl-L-homocysteine + 4 H(+). In terms of biological role, specifically dimethylates two adjacent adenosines (A1518 and A1519) in the loop of a conserved hairpin near the 3'-end of 16S rRNA in the 30S particle. May play a critical role in biogenesis of 30S subunits. The sequence is that of Ribosomal RNA small subunit methyltransferase A from Bordetella bronchiseptica (strain ATCC BAA-588 / NCTC 13252 / RB50) (Alcaligenes bronchisepticus).